Consider the following 208-residue polypeptide: Uracil phosphoribosyltransferase (208 aa).

Residues Arg78, Arg103, and 130-138 contribute to the 5-phospho-alpha-D-ribose 1-diphosphate site; that span reads DPMLATGGS. Residues Ile193 and 198 to 200 contribute to the uracil site; that span reads GDA. Asp199 contributes to the 5-phospho-alpha-D-ribose 1-diphosphate binding site.

Belongs to the UPRTase family. It depends on Mg(2+) as a cofactor.

It carries out the reaction UMP + diphosphate = 5-phospho-alpha-D-ribose 1-diphosphate + uracil. It functions in the pathway pyrimidine metabolism; UMP biosynthesis via salvage pathway; UMP from uracil: step 1/1. Its activity is regulated as follows. Allosterically activated by GTP. Functionally, catalyzes the conversion of uracil and 5-phospho-alpha-D-ribose 1-diphosphate (PRPP) to UMP and diphosphate. The sequence is that of Uracil phosphoribosyltransferase from Roseiflexus castenholzii (strain DSM 13941 / HLO8).